We begin with the raw amino-acid sequence, 241 residues long: Venom nerve growth factor 2 (241 aa).

Residues 1 to 18 form the signal peptide; it reads MSMLCYTLITAFLIGIWA. A propeptide spanning residues 19–125 is cleaved from the precursor; the sequence is APKSEDNVPL…SLNRNIRAKR (107 aa). The segment at 47-67 is disordered; the sequence is GLKTSRNTDQRHPAPQKAEDQ. Cystine bridges form between cysteine 139–cysteine 203, cysteine 181–cysteine 231, and cysteine 191–cysteine 233.

Belongs to the NGF-beta family. Homodimer; non-covalently linked. Expressed by the venom gland.

It localises to the secreted. Its function is as follows. Nerve growth factor is important for the development and maintenance of the sympathetic and sensory nervous systems. It stimulates division and differentiation of sympathetic and embryonic sensory neurons as well as basal forebrain cholinergic neurons in the brain. Its relevance in the snake venom is not clear. However, it has been shown to inhibit metalloproteinase-dependent proteolysis of platelet glycoprotein Ib alpha, suggesting a metalloproteinase inhibition to prevent metalloprotease autodigestion and/or protection against prey proteases. Binds a lipid between the two protein chains in the homodimer. The lipid-bound form promotes histamine relase from mouse mast cells, contrary to the lipid-free form. The sequence is that of Venom nerve growth factor 2 from Naja sputatrix (Malayan spitting cobra).